The chain runs to 161 residues: Phosphopantetheine adenylyltransferase (161 aa).

Belongs to the eukaryotic CoaD family.

It is found in the cytoplasm. The enzyme catalyses (R)-4'-phosphopantetheine + ATP + H(+) = 3'-dephospho-CoA + diphosphate. It participates in cofactor biosynthesis; coenzyme A biosynthesis. Reversibly transfers an adenylyl group from ATP to 4'-phosphopantetheine, yielding dephospho-CoA (dPCoA) and pyrophosphate. The chain is Phosphopantetheine adenylyltransferase from Methanosarcina barkeri (strain Fusaro / DSM 804).